The following is a 1218-amino-acid chain: Coatomer subunit alpha-3 (1218 aa).

WD repeat units follow at residues 7–48, 49–88, 91–132, 133–172, 202–241, 246–285, 288–326, 363–404, and 450–489; these read TKSN…DRFD, EHDGPVRGVHFHATQPLFVSGGDDYKIKVWNYKTHRCLFT, GHLD…AVLT, GHNHYVMCASFHPKEDLVVSASLDQTVRVWDIGALRKKTV, GHDRGVNWASFHPTLPLIVSGADDRQVKLWRMNDTKAWEV, GHMNNVSCVMFHAKQDIIVSNSEDKSIRVWDATKRTGIQT, REHDRFWILAAHPEMNLLAAGHDNGMIVFKLERERPAFS, SLNQ…AGRT, and PLPIAMDAIYYAGTGNLLCKAEDRVTIFDLQQRLILGELQ. The tract at residues 854-893 is disordered; sequence AMANGGDGFDAEEGEANEEDGEEGGWDLEDLELPPEAETP. Over residues 862–888 the composition is skewed to acidic residues; the sequence is FDAEEGEANEEDGEEGGWDLEDLELPP.

In terms of assembly, oligomeric complex that consists of at least the alpha, beta, beta', gamma, delta, epsilon and zeta subunits.

It localises to the cytoplasm. The protein localises to the golgi apparatus membrane. The protein resides in the cytoplasmic vesicle. Its subcellular location is the COPI-coated vesicle membrane. Its function is as follows. The coatomer is a cytosolic protein complex that binds to dilysine motifs and reversibly associates with Golgi non-clathrin-coated vesicles, which further mediate biosynthetic protein transport from the ER, via the Golgi up to the trans Golgi network. Coatomer complex is required for budding from Golgi membranes, and is essential for the retrograde Golgi-to-ER transport of dilysine-tagged proteins. This chain is Coatomer subunit alpha-3, found in Oryza sativa subsp. japonica (Rice).